Reading from the N-terminus, the 186-residue chain is ATP synthase subunit delta (186 aa).

This sequence belongs to the ATPase delta chain family. F-type ATPases have 2 components, F(1) - the catalytic core - and F(0) - the membrane proton channel. F(1) has five subunits: alpha(3), beta(3), gamma(1), delta(1), epsilon(1). CF(0) has four main subunits: a(1), b(1), b'(1) and c(10-14). The alpha and beta chains form an alternating ring which encloses part of the gamma chain. F(1) is attached to F(0) by a central stalk formed by the gamma and epsilon chains, while a peripheral stalk is formed by the delta, b and b' chains.

Its subcellular location is the cell inner membrane. In terms of biological role, f(1)F(0) ATP synthase produces ATP from ADP in the presence of a proton or sodium gradient. F-type ATPases consist of two structural domains, F(1) containing the extramembraneous catalytic core and F(0) containing the membrane proton channel, linked together by a central stalk and a peripheral stalk. During catalysis, ATP synthesis in the catalytic domain of F(1) is coupled via a rotary mechanism of the central stalk subunits to proton translocation. Its function is as follows. This protein is part of the stalk that links CF(0) to CF(1). It either transmits conformational changes from CF(0) to CF(1) or is implicated in proton conduction. This is ATP synthase subunit delta from Rhodospirillum rubrum (strain ATCC 11170 / ATH 1.1.1 / DSM 467 / LMG 4362 / NCIMB 8255 / S1).